A 385-amino-acid chain; its full sequence is UDP-N-acetylglucosamine--N-acetylmuramyl-(pentapeptide) pyrophosphoryl-undecaprenol N-acetylglucosamine transferase (385 aa).

UDP-N-acetyl-alpha-D-glucosamine contacts are provided by residues Thr11–Gly13, Asn117, Arg160, Ser215, and Gln317.

This sequence belongs to the glycosyltransferase 28 family. MurG subfamily.

It localises to the cell inner membrane. It catalyses the reaction di-trans,octa-cis-undecaprenyl diphospho-N-acetyl-alpha-D-muramoyl-L-alanyl-D-glutamyl-meso-2,6-diaminopimeloyl-D-alanyl-D-alanine + UDP-N-acetyl-alpha-D-glucosamine = di-trans,octa-cis-undecaprenyl diphospho-[N-acetyl-alpha-D-glucosaminyl-(1-&gt;4)]-N-acetyl-alpha-D-muramoyl-L-alanyl-D-glutamyl-meso-2,6-diaminopimeloyl-D-alanyl-D-alanine + UDP + H(+). The protein operates within cell wall biogenesis; peptidoglycan biosynthesis. Functionally, cell wall formation. Catalyzes the transfer of a GlcNAc subunit on undecaprenyl-pyrophosphoryl-MurNAc-pentapeptide (lipid intermediate I) to form undecaprenyl-pyrophosphoryl-MurNAc-(pentapeptide)GlcNAc (lipid intermediate II). This is UDP-N-acetylglucosamine--N-acetylmuramyl-(pentapeptide) pyrophosphoryl-undecaprenol N-acetylglucosamine transferase from Rickettsia typhi (strain ATCC VR-144 / Wilmington).